The primary structure comprises 527 residues: G patch domain-containing protein 2 (527 aa).

A disordered region spans residues Leu-35–Val-135. Residues Arg-62 to Asn-76 show a composition bias toward basic residues. Over residues Glu-97–Ser-116 the composition is skewed to basic and acidic residues. Ser-114, Ser-116, and Ser-145 each carry phosphoserine. Disordered regions lie at residues Ser-175 to Glu-281, Thr-350 to Lys-375, and Thr-480 to Ala-527. Basic and acidic residues predominate over residues Gly-186–Arg-196. Over residues Lys-206 to Gly-215 the composition is skewed to basic residues. A compositionally biased stretch (basic and acidic residues) spans Ser-231–Ser-257. In terms of domain architecture, G-patch spans Glu-466 to Pro-512. Residues Pro-510 to Ala-527 are compositionally biased toward low complexity.

In terms of assembly, interacts with DHX15.

It is found in the nucleus speckle. It localises to the nucleus. The protein localises to the nucleolus. Enhances the ATPase activity of DHX15 in vitro. In Mus musculus (Mouse), this protein is G patch domain-containing protein 2 (Gpatch2).